A 1927-amino-acid polypeptide reads, in one-letter code: Lactase/phlorizin hydrolase (1927 aa).

The N-terminal stretch at 1–19 (MELSWHVVFIALLSFSCWG) is a signal peptide. Residues 20–868 (SDWESDRNFI…NTVNLPSKVR (849 aa)) constitute a propeptide, XBetaGly. The Extracellular segment spans residues 20-1882 (SDWESDRNFI…LMLGTTEAQT (1863 aa)). Residue N42 is glycosylated (N-linked (GlcNAc...) asparagine). The tract at residues 44-286 (SGLLGDQSSN…FIFNLKLPDC (243 aa)) is glycosyl hydrolase-1 1; Region I. The glycosyl hydrolase-1 2; Region II stretch occupies residues 362-855 (IWEAFANQSR…GFLTKGAKRL (494 aa)). N-linked (GlcNAc...) asparagine glycosylation is found at N368, N418, N512, N821, N934, N946, and N989. Positions 902–1366 (TFRDDFLWGV…EVITNNGMPL (465 aa)) are glycosyl hydrolase-1 3; Region III. Phlorizin hydrolase/glycosylceramidase activity. The active-site Proton donor; for phlorizin hydrolase/Glycosylceramidase activity is E1065. A glycan (N-linked (GlcNAc...) asparagine) is linked at N1174. Residues 1220–1244 (RLNPPSYEDDQEMAEEEDPSWPSTA) form a disordered region. The span at 1226-1238 (YEDDQEMAEEEDP) shows a compositional bias: acidic residues. E1273 (nucleophile; for phlorizin hydrolase/Glycosylceramidase activity) is an active-site residue. N-linked (GlcNAc...) asparagine glycosylation is found at N1340 and N1508. The interval 1373–1846 (LYGRFPEGFI…CNGFPDPATG (474 aa)) is glycosyl hydrolase-1 4; Region IV. Lactase activity. E1538 (proton donor; for lactase activity) is an active-site residue. The tract at residues 1647 to 1927 (RDRSLAAGLN…QQELSPVSSF (281 aa)) is required for homodimerization and transport to the plasma membrane. Residues N1656 and N1672 are each glycosylated (N-linked (GlcNAc...) asparagine). The active-site Nucleophile; for lactase activity is the E1749. N-linked (GlcNAc...) asparagine glycosylation is found at N1761 and N1814. The helical transmembrane segment at 1883 to 1901 (ALYVLFSLVLLGVCGLAFL) threads the bilayer. Topologically, residues 1902-1927 (SYKYCKRSKQGKTQRSQQELSPVSSF) are cytoplasmic.

This sequence belongs to the glycosyl hydrolase 1 family. As to quaternary structure, homodimer. N-glycosylated. As to expression, specifically expressed in small intestine.

The protein localises to the apical cell membrane. It carries out the reaction lactose + H2O = beta-D-galactose + D-glucose. It catalyses the reaction phlorizin + H2O = phloretin + beta-D-glucose. The enzyme catalyses D-cellobiose + H2O = beta-D-glucose + D-glucose. The catalysed reaction is quercetin 4'-O-beta-D-glucoside + H2O = quercetin + beta-D-glucose. It carries out the reaction quercetin 3-O-beta-D-glucoside + H2O = quercetin + beta-D-glucose. It catalyses the reaction kaempferol 3-O-beta-D-glucoside + H2O = kaempferol + beta-D-glucose. The enzyme catalyses luteolin 7-O-beta-D-glucoside + H2O = luteolin + beta-D-glucose. The catalysed reaction is luteolin 4'-O-beta-D-glucoside + H2O = luteolin + beta-D-glucose. It carries out the reaction (2S)-naringenin 7-O-beta-D-glucoside + H2O = (2S)-naringenin + beta-D-glucose. It catalyses the reaction eriodictyol-7-O-beta-D-glucoside + H2O = (S)-eriodictyol + beta-D-glucose. The enzyme catalyses apigenin 7-O-beta-D-glucoside + H2O = apigenin + beta-D-glucose. The catalysed reaction is daidzein 7-O-beta-D-glucoside + H2O = daidzein + beta-D-glucose + H(+). It carries out the reaction genistein 7-O-beta-D-glucoside + H2O = genistein + beta-D-glucose. It catalyses the reaction a beta-D-galactosyl-N-acylsphingosine + H2O = a ceramide + beta-D-galactose.. The enzyme catalyses beta-D-glucosyl-(1&lt;-&gt;1')-N-hexadecanoylsphing-4-enine + H2O = N-hexadecanoylsphing-4-enine + beta-D-glucose. The catalysed reaction is beta-D-galactosyl-(1&lt;-&gt;1')-N-hexadecanoylsphing-4-enine + H2O = beta-D-galactose + N-hexadecanoylsphing-4-enine. It carries out the reaction beta-D-galactosyl-(1&lt;-&gt;1')-N-hexadecanoylsphinganine + H2O = N-hexadecanoylsphinganine + beta-D-galactose. It catalyses the reaction beta-D-glucosyl-(1&lt;-&gt;1')-N-hexadecanoylsphinganine + H2O = N-hexadecanoylsphinganine + beta-D-glucose. Its function is as follows. Broad specificity glycosidase of the intestinal brush border membrane that hydrolyzes lactose, the main sugar in mammalian milk, to produce D-glucose and D-galactose. The mature protein is composed of two domains that catalyze the hydrolysis of beta-glucopyranosides and beta-galactopyranosides, with a preference for hydrophilic aglycones (in lactose and cellobiose) for one domain and hydrophobic aglycones (in phlorizin and glycosylceramides) for the other. This chain is Lactase/phlorizin hydrolase, found in Homo sapiens (Human).